The sequence spans 72 residues: Translation initiation factor IF-1 (72 aa).

The region spanning 1-72 is the S1-like domain; sequence MSKDDVIEMQ…TRGRITWRAK (72 aa).

The protein belongs to the IF-1 family. Component of the 30S ribosomal translation pre-initiation complex which assembles on the 30S ribosome in the order IF-2 and IF-3, IF-1 and N-formylmethionyl-tRNA(fMet); mRNA recruitment can occur at any time during PIC assembly.

It localises to the cytoplasm. Its function is as follows. One of the essential components for the initiation of protein synthesis. Stabilizes the binding of IF-2 and IF-3 on the 30S subunit to which N-formylmethionyl-tRNA(fMet) subsequently binds. Helps modulate mRNA selection, yielding the 30S pre-initiation complex (PIC). Upon addition of the 50S ribosomal subunit IF-1, IF-2 and IF-3 are released leaving the mature 70S translation initiation complex. The chain is Translation initiation factor IF-1 from Clostridium beijerinckii (strain ATCC 51743 / NCIMB 8052) (Clostridium acetobutylicum).